Here is a 284-residue protein sequence, read N- to C-terminus: Bifunctional protein FolD (284 aa).

Position 166–168 (166–168 (GAS)) interacts with NADP(+).

Belongs to the tetrahydrofolate dehydrogenase/cyclohydrolase family. Homodimer.

It carries out the reaction (6R)-5,10-methylene-5,6,7,8-tetrahydrofolate + NADP(+) = (6R)-5,10-methenyltetrahydrofolate + NADPH. It catalyses the reaction (6R)-5,10-methenyltetrahydrofolate + H2O = (6R)-10-formyltetrahydrofolate + H(+). It participates in one-carbon metabolism; tetrahydrofolate interconversion. In terms of biological role, catalyzes the oxidation of 5,10-methylenetetrahydrofolate to 5,10-methenyltetrahydrofolate and then the hydrolysis of 5,10-methenyltetrahydrofolate to 10-formyltetrahydrofolate. The protein is Bifunctional protein FolD of Legionella pneumophila (strain Paris).